Consider the following 335-residue polypeptide: Pregnancy-specific beta-1-glycoprotein 5 (335 aa).

The signal sequence occupies residues 1-34; sequence MGPLSAPPCTQHITWKGLLLTASLLNFWNLPITA. Residues 35 to 144 enclose the Ig-like V-type domain; the sequence is QVTIEALPPK…TGYFTFNLYL (110 aa). Asn104 and Asn111 each carry an N-linked (GlcNAc...) asparagine glycan. Positions 127–129 match the Cell attachment site motif; sequence RGD. 2 Ig-like C2-type domains span residues 147–234 and 239–317; these read PKPY…VTLN and PDLP…KSMT. 2 disulfides stabilise this stretch: Cys169-Cys217 and Cys261-Cys301. Asn175 and Asn210 each carry an N-linked (GlcNAc...) asparagine glycan.

This sequence belongs to the immunoglobulin superfamily. CEA family. In terms of tissue distribution, synthesized by syncytiotrophoblast of the placenta.

It is found in the secreted. The polypeptide is Pregnancy-specific beta-1-glycoprotein 5 (PSG5) (Homo sapiens (Human)).